A 501-amino-acid chain; its full sequence is Dipeptide and tripeptide permease B (501 aa).

Residues methionine 1–arginine 27 lie on the Cytoplasmic side of the membrane. A helical membrane pass occupies residues phenylalanine 28–serine 48. Residues glutamine 49–serine 52 are Periplasmic-facing. The helical transmembrane segment at phenylalanine 53–valine 73 threads the bilayer. The Cytoplasmic portion of the chain corresponds to glycine 74–arginine 82. Residues threonine 83 to tyrosine 103 traverse the membrane as a helical segment. At asparagine 104–aspartate 106 the chain is on the periplasmic side. The helical transmembrane segment at leucine 107 to alanine 127 threads the bilayer. Over serine 128–threonine 146 the chain is Cytoplasmic. A helical transmembrane segment spans residues leucine 147–alanine 167. The Periplasmic portion of the chain corresponds to aspartate 168–tyrosine 172. The helical transmembrane segment at threonine 173–cysteine 193 threads the bilayer. At arginine 194–tyrosine 211 the chain is on the cytoplasmic side. The chain crosses the membrane as a helical span at residues glycine 212–methionine 232. Position 233 (histidine 233) is a topological domain, periplasmic. Residues histidine 234 to phenylalanine 254 traverse the membrane as a helical segment. Residues arginine 255–lysine 267 are Cytoplasmic-facing. Residues methionine 268 to methionine 288 form a helical membrane-spanning segment. The Periplasmic portion of the chain corresponds to proline 289–proline 311. Residues isoleucine 312–isoleucine 332 traverse the membrane as a helical segment. Residues tyrosine 333–threonine 350 are Cytoplasmic-facing. The helical transmembrane segment at leucine 351–alanine 371 threads the bilayer. Topologically, residues aspartate 372–tryptophan 380 are periplasmic. The helical transmembrane segment at phenylalanine 381–leucine 401 threads the bilayer. Over alanine 402–arginine 411 the chain is Cytoplasmic. Residues leucine 412–glycine 432 traverse the membrane as a helical segment. At tyrosine 433–aspartate 456 the chain is on the periplasmic side. A helical transmembrane segment spans residues valine 457–proline 477. At tryptophan 478–alanine 501 the chain is on the cytoplasmic side.

It belongs to the major facilitator superfamily. Proton-dependent oligopeptide transporter (POT/PTR) (TC 2.A.17) family. DtpB subfamily.

Its subcellular location is the cell inner membrane. Its function is as follows. Proton-dependent permease that transports di- and tripeptides. The chain is Dipeptide and tripeptide permease B from Aeromonas hydrophila subsp. hydrophila (strain ATCC 7966 / DSM 30187 / BCRC 13018 / CCUG 14551 / JCM 1027 / KCTC 2358 / NCIMB 9240 / NCTC 8049).